An 864-amino-acid polypeptide reads, in one-letter code: Dynamin-1 (864 aa).

Positions 28-294 (DLDLPQIAVV…LTNHIRDTLP (267 aa)) constitute a Dynamin-type G domain. The interval 38-45 (GGQSAGKS) is G1 motif. Ser-41, Gly-43, Lys-44, Ser-45, Ser-46, Arg-59, and Gly-60 together coordinate GDP. Positions 64–66 (VTR) are G2 motif. The residue at position 80 (Tyr-80) is a Phosphotyrosine. Residue Tyr-125 is modified to 3'-nitrotyrosine; alternate. The residue at position 125 (Tyr-125) is a Phosphotyrosine; alternate. A G3 motif region spans residues 136–139 (DLPG). The tract at residues 205 to 208 (TKLD) is G4 motif. The GDP site is built by Lys-206, Asp-208, Asp-211, Asn-236, Arg-237, and Gln-239. A G5 motif region spans residues 235-238 (VNRS). Residues Ser-306 and Ser-347 each carry the phosphoserine modification. Tyr-354 bears the Phosphotyrosine mark. Ser-512 carries the post-translational modification Phosphoserine. Residues 519–625 (LVIRKGWLTI…WKASFLRAGV (107 aa)) form the PH domain. The GED domain maps to 659 to 750 (VETIRNLVDS…IIGDINTTTV (92 aa)). Positions 767 to 864 (SVPAGRRSPT…PESPRPPFDL (98 aa)) are disordered. Residue Ser-774 is modified to Phosphoserine; by GSK3-beta. Ser-778 carries the post-translational modification Phosphoserine. The residue at position 796 (Arg-796) is an Omega-N-methylarginine. Position 822 is a phosphoserine (Ser-822). Positions 825 to 843 (PFGPPPQVPSRPNRAPPGV) are enriched in pro residues. Ser-851 and Ser-857 each carry phosphoserine.

Belongs to the TRAFAC class dynamin-like GTPase superfamily. Dynamin/Fzo/YdjA family. Homodimer; homodimerization is mediated by the dynamin-type G domain which promotes assembly-stimulated GTPase activity. Homo-tetramer formed from two dimers in the absence of lipid. Oligomerizes into a helical polymer that self-assembles around the vesicle membrane, when associated to the menbrane through lipid binding. Interacts (via C-terminal proline-rich domain (PRD)) with SNX9 (via SH3 domain); this interaction allows regulation of DNM1 self-assembly during late stages of endocytic vesicle formation and supports DNM1's early functions in accelerating clathrin-coated pits (CCPs) maturation in non neuronals cell. Interacts (via C-terminal proline-rich domain (PRD)) with MYO1E (via SH3 domain); this interaction regulates receptor-mediated endocytosis. Interacts with SNX33 (via SH3 domain); this interaction decreases DNM1-dependent endocytosis. Interacts with DIAPH1. Interacts with GRB2 (via SH3 domain); this interaction mediates disassembly of DNM1 polymers, therefore modulates self-assembly. Forms a complex with BIN1 (via SH3 domain) and SH3GL2 (via SH3 domain). Forms a complex with SH3GL2 (via SH3 domain) and AMPH (via SH3 domain). Forms a complex with SH3GL2 (via SH3 domain) and SYNJ1. Interacts with AMPH. Interacts (via C-terminal proline-rich domain (PRD)) with SYT1; this interaction facilitates vesicle fission during clathrin-mediated endocytosis (CME). Interacts (via C-terminal proline-rich domain (PRD)) with PLCG1 (via SH3 domain); this interaction stimulates the release of GDP from DNM1 and enhances DNM1-dependent endocytosis. Interacts with SNPH; this interaction inhibits the binding of DNM1 to AMPH and DNM1-receptor-mediated endocytosis. Interacts with CAV1. Interacts with SH3GLB1 (via SH3 domain). Interacts with PACSIN1 (via SH3 domain), PACSIN2 (via SH3 domain) and PACSIN3 (via SH3 domain). Interacts with UNC119; this interaction decreases DNM1's GTPase activity and affects DNM1's interaction with AMPH. Interacts (GTP-bound form) with DNAJC6; this interaction allows clathrin-coated vesicle (CCV) formation at the plasma membrane. Phosphorylation at Ser-774 by GSK3B/GSK3-beta leads to inactivation of receptor-mediated endocytosis in non-neuronal cells. Dephosphorylation at Ser-774, through the EGFR downstream signaling, leads to activation and regulates early stages of clathrin-mediated endocytosis (CME). Phosphorylated by CDK5 leading to synaptic vesicle endocytosis (SVE) activation.

It localises to the cell membrane. It is found in the membrane. The protein resides in the clathrin-coated pit. The protein localises to the cytoplasmic vesicle. Its subcellular location is the presynapse. It localises to the secretory vesicle. It is found in the chromaffin granule. The enzyme catalyses GTP + H2O = GDP + phosphate + H(+). GTPase activity is activated by 1-phosphatidyl-1D-myo-inositol 4,5-bisphosphate. GTPase activity is inhibited by the heterodimer G protein formed by GNB1 and GNG2 with an IC(50)=400 nM when DNM1 concentration is 5 nM. Its function is as follows. Catalyzes the hydrolysis of GTP and utilizes this energy to mediate vesicle scission and participates in many forms of endocytosis, such as clathrin-mediated endocytosis or synaptic vesicle endocytosis as well as rapid endocytosis (RE). Associates to the membrane, through lipid binding, and self-assembles into rings and stacks of interconnected rings through oligomerization to form a helical polymer around the vesicle membrane leading to constriction of invaginated coated pits around their necks. Self-assembly of the helical polymer induces membrane tubules narrowing until the polymer reaches a length sufficient to trigger GTP hydrolysis. Depending on the curvature imposed on the tubules, membrane detachment from the helical polymer upon GTP hydrolysis can cause spontaneous hemifission followed by complete fission. May play a role in regulating early stages of clathrin-mediated endocytosis in non-neuronal cells through its activation by dephosphorylation via the signaling downstream of EGFR. Controls vesicle size at a step before fission, during formation of membrane pits, at hippocampal synapses. Controls plastic adaptation of the synaptic vesicle recycling machinery to high levels of activity. Mediates rapid endocytosis (RE), a Ca(2+)-dependent and clathrin- and K(+)-independent process in chromaffin cells. Microtubule-associated force-producing protein involved in producing microtubule bundles and able to bind and hydrolyze GTP. Through its interaction with DNAJC6, acts during the early steps of clathrin-coated vesicle (CCV) formation. The chain is Dynamin-1 from Homo sapiens (Human).